The chain runs to 457 residues: tRNA-2-methylthio-N(6)-dimethylallyladenosine synthase (457 aa).

Residues 3-120 (KKVYVKTFGC…LPQMIDARRA (118 aa)) form the MTTase N-terminal domain. Cysteine 12, cysteine 49, cysteine 83, cysteine 157, cysteine 161, and cysteine 164 together coordinate [4Fe-4S] cluster. In terms of domain architecture, Radical SAM core spans 143–377 (RVEGPSAFVS…QATIEENVAR (235 aa)). Positions 380-447 (QSMVGKVERI…PHSLRGELLL (68 aa)) constitute a TRAM domain.

Belongs to the methylthiotransferase family. MiaB subfamily. As to quaternary structure, monomer. The cofactor is [4Fe-4S] cluster.

Its subcellular location is the cytoplasm. The catalysed reaction is N(6)-dimethylallyladenosine(37) in tRNA + (sulfur carrier)-SH + AH2 + 2 S-adenosyl-L-methionine = 2-methylsulfanyl-N(6)-dimethylallyladenosine(37) in tRNA + (sulfur carrier)-H + 5'-deoxyadenosine + L-methionine + A + S-adenosyl-L-homocysteine + 2 H(+). Its function is as follows. Catalyzes the methylthiolation of N6-(dimethylallyl)adenosine (i(6)A), leading to the formation of 2-methylthio-N6-(dimethylallyl)adenosine (ms(2)i(6)A) at position 37 in tRNAs that read codons beginning with uridine. The polypeptide is tRNA-2-methylthio-N(6)-dimethylallyladenosine synthase (Burkholderia vietnamiensis (strain G4 / LMG 22486) (Burkholderia cepacia (strain R1808))).